The sequence spans 237 residues: Ribonuclease PH (237 aa).

Phosphate is bound by residues R86 and 124–126 (GTR).

Belongs to the RNase PH family. Homohexameric ring arranged as a trimer of dimers.

It catalyses the reaction tRNA(n+1) + phosphate = tRNA(n) + a ribonucleoside 5'-diphosphate. Phosphorolytic 3'-5' exoribonuclease that plays an important role in tRNA 3'-end maturation. Removes nucleotide residues following the 3'-CCA terminus of tRNAs; can also add nucleotides to the ends of RNA molecules by using nucleoside diphosphates as substrates, but this may not be physiologically important. Probably plays a role in initiation of 16S rRNA degradation (leading to ribosome degradation) during starvation. In Rhodopseudomonas palustris (strain ATCC BAA-98 / CGA009), this protein is Ribonuclease PH.